The sequence spans 196 residues: Imidazoleglycerol-phosphate dehydratase (196 aa).

It belongs to the imidazoleglycerol-phosphate dehydratase family.

Its subcellular location is the cytoplasm. The enzyme catalyses D-erythro-1-(imidazol-4-yl)glycerol 3-phosphate = 3-(imidazol-4-yl)-2-oxopropyl phosphate + H2O. Its pathway is amino-acid biosynthesis; L-histidine biosynthesis; L-histidine from 5-phospho-alpha-D-ribose 1-diphosphate: step 6/9. In Desulforamulus reducens (strain ATCC BAA-1160 / DSM 100696 / MI-1) (Desulfotomaculum reducens), this protein is Imidazoleglycerol-phosphate dehydratase.